The following is a 393-amino-acid chain: S-adenosylmethionine synthase 3 (393 aa).

Glu-9 lines the Mg(2+) pocket. His-15 serves as a coordination point for ATP. Glu-43 lines the K(+) pocket. L-methionine-binding residues include Glu-56 and Gln-99. ATP-binding positions include 167-169 (NGK), 235-238 (SGRF), Asp-246, 252-253 (RK), Ala-269, Lys-273, and Lys-277. Asp-246 contacts L-methionine. Lys-277 provides a ligand contact to L-methionine.

Belongs to the AdoMet synthase family. In terms of assembly, homotetramer. Requires Mn(2+) as cofactor. It depends on Mg(2+) as a cofactor. The cofactor is Co(2+). K(+) is required as a cofactor. As to expression, mostly expressed in flowers, seedpods and roots, and, to a lower extent, in stems and leaves.

It is found in the cytoplasm. The catalysed reaction is L-methionine + ATP + H2O = S-adenosyl-L-methionine + phosphate + diphosphate. The protein operates within amino-acid biosynthesis; S-adenosyl-L-methionine biosynthesis; S-adenosyl-L-methionine from L-methionine: step 1/1. Catalyzes the formation of S-adenosylmethionine from methionine and ATP. The reaction comprises two steps that are both catalyzed by the same enzyme: formation of S-adenosylmethionine (AdoMet) and triphosphate, and subsequent hydrolysis of the triphosphate. This chain is S-adenosylmethionine synthase 3 (MSAMS3), found in Brassica juncea (Indian mustard).